Consider the following 435-residue polypeptide: Hydrogenobyrinate a,c-diamide synthase (435 aa).

A GATase cobBQ-type domain is found at 239–422 (RIGVARDASF…IHFYLPSNPQ (184 aa)). Cysteine 321 (nucleophile) is an active-site residue.

Belongs to the CobB/CbiA family. The cofactor is Mg(2+).

The catalysed reaction is hydrogenobyrinate + 2 L-glutamine + 2 ATP + 2 H2O = hydrogenobyrinate a,c-diamide + 2 L-glutamate + 2 ADP + 2 phosphate + 2 H(+). The protein operates within cofactor biosynthesis; adenosylcobalamin biosynthesis; cob(II)yrinate a,c-diamide from precorrin-2 (aerobic route): step 9/10. In terms of biological role, catalyzes the ATP-dependent amidation of the two carboxylate groups at positions a and c of hydrogenobyrinate, using either L-glutamine or ammonia as the nitrogen source. This Pseudomonas aeruginosa (strain ATCC 15692 / DSM 22644 / CIP 104116 / JCM 14847 / LMG 12228 / 1C / PRS 101 / PAO1) protein is Hydrogenobyrinate a,c-diamide synthase.